The following is a 311-amino-acid chain: MSTEKLTVALLSGGASAEREVSLKSGEQVFNALDKQRYLVLRYDPAHDLTRLAADAEKIDVALIILHGRMGEDGTIQGLLESLGIPYQGSGVLGSAVAMNKILSKQLYIHAGLPVAPHLVADRREPPDLDTVADRLGLPVVVKPEHEGSSIGLSIVRNRDQLAAAVETGWQYDRRCLIEKYVHGIEITGGVLGNDHLQALPLIEIIPGEAYEFFDYKAKYTPGASREICPARLSDTITAKAQEYARKAHQALCCKGYSRTDMIVSGNDIFILETNTIPGMTATSLFPQAAAVAGISFSALLDRLIELALED.

Positions 105 to 306 (KQLYIHAGLP…FSALLDRLIE (202 aa)) constitute an ATP-grasp domain. 133 to 188 (ADRLGLPVVVKPEHEGSSIGLSIVRNRDQLAAAVETGWQYDRRCLIEKYVHGIEIT) is a binding site for ATP. Residues Asp261, Glu273, and Asn275 each contribute to the Mg(2+) site.

It belongs to the D-alanine--D-alanine ligase family. Mg(2+) serves as cofactor. Requires Mn(2+) as cofactor.

It localises to the cytoplasm. The catalysed reaction is 2 D-alanine + ATP = D-alanyl-D-alanine + ADP + phosphate + H(+). It functions in the pathway cell wall biogenesis; peptidoglycan biosynthesis. Its function is as follows. Cell wall formation. The sequence is that of D-alanine--D-alanine ligase from Syntrophobacter fumaroxidans (strain DSM 10017 / MPOB).